Reading from the N-terminus, the 276-residue chain is Formamidopyrimidine-DNA glycosylase (276 aa).

Catalysis depends on P2, which acts as the Schiff-base intermediate with DNA. E3 functions as the Proton donor in the catalytic mechanism. The Proton donor; for beta-elimination activity role is filled by K60. DNA-binding residues include R113 and R152. An FPG-type zinc finger spans residues 241–275 (NVFRKTGHPCPRCGHLIEKLIVAQRSTHICPICQK). Catalysis depends on R265, which acts as the Proton donor; for delta-elimination activity.

This sequence belongs to the FPG family. Monomer. Requires Zn(2+) as cofactor.

The catalysed reaction is Hydrolysis of DNA containing ring-opened 7-methylguanine residues, releasing 2,6-diamino-4-hydroxy-5-(N-methyl)formamidopyrimidine.. It carries out the reaction 2'-deoxyribonucleotide-(2'-deoxyribose 5'-phosphate)-2'-deoxyribonucleotide-DNA = a 3'-end 2'-deoxyribonucleotide-(2,3-dehydro-2,3-deoxyribose 5'-phosphate)-DNA + a 5'-end 5'-phospho-2'-deoxyribonucleoside-DNA + H(+). Involved in base excision repair of DNA damaged by oxidation or by mutagenic agents. Acts as a DNA glycosylase that recognizes and removes damaged bases. Has a preference for oxidized purines, such as 7,8-dihydro-8-oxoguanine (8-oxoG). Has AP (apurinic/apyrimidinic) lyase activity and introduces nicks in the DNA strand. Cleaves the DNA backbone by beta-delta elimination to generate a single-strand break at the site of the removed base with both 3'- and 5'-phosphates. The sequence is that of Formamidopyrimidine-DNA glycosylase from Protochlamydia amoebophila (strain UWE25).